The sequence spans 400 residues: Dehydrogenase efuE (400 aa).

NAD(+) is bound by residues 222–223, 303–305, and Asp329; these read AI and TAR. Arg305 is a catalytic residue. Glu334 is an active-site residue. His352 functions as the Proton donor in the catalytic mechanism. 352-355 is an NAD(+) binding site; the sequence is HLGG.

The protein belongs to the D-isomer specific 2-hydroxyacid dehydrogenase family.

It participates in secondary metabolite biosynthesis; terpenoid biosynthesis. Dehydrogenase; part of the gene cluster that mediates the biosynthesis of enfumafungin, a glycosylated fernene-type triterpenoid with potent antifungal activity, mediated by its interaction with beta-1,3-glucan synthase and the fungal cell wall. The pathway begins with the terpene cyclase-glycosyl transferase fusion protein that most likely uses 2,3-oxidosqualene as substrate and catalyzes glycosylation immediately after cyclization. The fernene glycoside then could be processed by the desaturase efuI which catalyzes isomerization of a double bond established by efuA to form the core structure. The latter would then undergo a series of hydroxylations in unknown order at C-2, C-19, C-23 and C-25, which would be catalyzed by two of the three cytochrome P450 monooxygenases efuB, efuG or efuH. The hydroxy-group at C-25 becomes oxidized by the dehydrogenase efuE to enable a spontaneous, non-enzymatic hemiacetal formation with C-23. After hydroxylation at C-2, acetylation by the acetyltransferase efuC takes place. The final steps in enfumafungin biosynthesis require expansion of the 5-membered ring by lactonization via a Baeyer-Villiger reaction mediated by one of the BGC's cytochrome P450 monooxygenases (efuB, efuG or efuH) followed by ring cleavage. This type of reaction would establish a double bond between C-20 and C-21 which could be reduced by the reductase efuL to form the final product. This is Dehydrogenase efuE from Hormonema carpetanum.